We begin with the raw amino-acid sequence, 234 residues long: Large ribosomal subunit protein uL1 (234 aa).

Belongs to the universal ribosomal protein uL1 family. In terms of assembly, part of the 50S ribosomal subunit.

Its function is as follows. Binds directly to 23S rRNA. The L1 stalk is quite mobile in the ribosome, and is involved in E site tRNA release. Functionally, protein L1 is also a translational repressor protein, it controls the translation of the L11 operon by binding to its mRNA. In Aliivibrio fischeri (strain ATCC 700601 / ES114) (Vibrio fischeri), this protein is Large ribosomal subunit protein uL1.